The sequence spans 657 residues: LIM and SH3 domain protein Lasp (657 aa).

Positions 3-63 constitute an LIM zinc-binding domain; the sequence is KTCARCQKVV…EAHIPKAKAT (61 aa). Nebulin repeat units follow at residues 64-95 and 96-130; these read AIADTPELKRIAENTKIQSNVKYHADFEKAKG and KFTQVADDPETLRIKQNTKHISNVAYHGDLEKKAA. Disordered stretches follow at residues 130–151, 164–223, 235–257, 294–318, 332–415, and 460–528; these read AMEKQRGSAEVSDSSNESEYFS, PTAS…PIQH, YQQLQQQQQQQQQQRAQQQQLHD, LYPTATSQQQQMPPPQSPANPQQQA, NSHH…SAAS, and KQHA…PKRI. The segment covering 140–150 has biased composition (polar residues); the sequence is VSDSSNESEYF. 2 stretches are compositionally biased toward low complexity: residues 172–215 and 236–254; these read AATT…QQQT and QQLQQQQQQQQQQRAQQQQ. The span at 332–341 shows a compositional bias: polar residues; sequence NSHHPSGNSV. The span at 342-357 shows a compositional bias: low complexity; it reads DQYDQPQQQQHQPQQQ. The segment covering 358 to 370 has biased composition (polar residues); the sequence is STNPTLVAAQQQQ. Over residues 371–403 the composition is skewed to low complexity; that stretch reads SHHSLLNNNASNGGISHSHHSNINNNGHGSQNQ. Residues 460–475 show a composition bias toward polar residues; the sequence is KQHASNGHMPNQQQQH. Serine 505 and serine 530 each carry phosphoserine. The interval 548 to 592 is disordered; that stretch reads EQAHQQQKHQQYYQQVQMMQQQEHPPQQQQMRQQPSYSSLQEKQS. The span at 549-586 shows a compositional bias: low complexity; it reads QAHQQQKHQQYYQQVQMMQQQEHPPQQQQMRQQPSYSS. Residues 596–657 enclose the SH3 domain; sequence TAMRVYRAIY…PANYVEQAVI (62 aa).

As to quaternary structure, interacts with osk.

The protein is LIM and SH3 domain protein Lasp of Drosophila melanogaster (Fruit fly).